We begin with the raw amino-acid sequence, 460 residues long: Baeyer-Villiger oxidase AgnL3 (460 aa).

This sequence belongs to the questin oxidase family. NADPH serves as cofactor.

It functions in the pathway secondary metabolite biosynthesis. Its function is as follows. Baeyer-Villiger oxidase; part of the gene cluster that mediates the biosynthesis of agnestins, dihydroxy-xanthone metabolites. The pathway begins with the assembly and cyclization of atrochrysone thioester by the non-reducing polyketide synthase Agnpks1. The atrochrysone carboxyl ACP thioesterase AgnL7 then breaks the thioester bond and releases the atrochrysone carboxylic acid as the first enzyme-free intermediate. The decarboxylase AgnL1 then catalyzes the concerted decarboxylation-elimination required to convert atochrysone carboxylic acid into emodin anthrone, which is further oxidized to emodin by the anthrone oxygenase AgnL2. Emodin then undergoes reduction catalyzed by the oxidoreductase AgnL4 to yield the dihydroquinone tautomer which is the substrate for reduction by the short chain dehydrogenase AgnL6 reduction to produce hydroxyketone, followed by AgnL8 dehydration and likely spontaneous autoxidation to chrysophanol. Baeyer-Villiger oxidation by the oxidase AgnL3 leads to monodictyphenone via cleavage of the C-10/C-10a bond of chrysophanol. Alternative cleavage at the C-4a/C-10 bond of chrysophanol also leads to the formation some cephalone F. Further conversion to agnestins A and B, requires reduction to dihydro-monodictyphenone, oxidation to agnestin C probably via an epoxide, and rearrangement to either agnestin A or agnestin B directly, although agnestin A or agnestin B can also interconvert. Within the cluster, AgnR1 is the only unassigned oxidoreductase present which could be involved in this conversion. However, AgnR1 seems not to be involved in this step, and thus genes involved in the proposed oxidation/reduction may be located elsewhere on the genome. Further agnestin A derivatives are probably formed by spontaneous decarboxylations, dehydrations and methanolysis reactions. The polypeptide is Baeyer-Villiger oxidase AgnL3 (Paecilomyces divaricatus (Penicillium divaricatum)).